The chain runs to 274 residues: Pyrroline-5-carboxylate reductase 3 (274 aa).

N-acetylalanine is present on alanine 2.

It belongs to the pyrroline-5-carboxylate reductase family. In terms of assembly, homodecamer; composed of 5 homodimers.

Its subcellular location is the cytoplasm. The catalysed reaction is L-proline + NADP(+) = (S)-1-pyrroline-5-carboxylate + NADPH + 2 H(+). The enzyme catalyses L-proline + NAD(+) = (S)-1-pyrroline-5-carboxylate + NADH + 2 H(+). It functions in the pathway amino-acid biosynthesis; L-proline biosynthesis; L-proline from L-glutamate 5-semialdehyde: step 1/1. Its function is as follows. Oxidoreductase that catalyzes the last step in proline biosynthesis, which corresponds to the reduction of pyrroline-5-carboxylate (P5C) to L-proline using NAD(P)H. Proline is synthesized from either glutamate or ornithine; both are converted to P5C, and then to proline via pyrroline-5-carboxylate reductases (PYCRs). PYCR3 is exclusively linked to the biosynthesis of proline from ornithine. This chain is Pyrroline-5-carboxylate reductase 3, found in Macaca fascicularis (Crab-eating macaque).